The primary structure comprises 304 residues: Glutaminase (304 aa).

Ser-63, Asn-113, Glu-157, Asn-164, Tyr-188, Tyr-240, and Val-258 together coordinate substrate.

This sequence belongs to the glutaminase family. Homotetramer.

The catalysed reaction is L-glutamine + H2O = L-glutamate + NH4(+). In Chromobacterium violaceum (strain ATCC 12472 / DSM 30191 / JCM 1249 / CCUG 213 / NBRC 12614 / NCIMB 9131 / NCTC 9757 / MK), this protein is Glutaminase.